The sequence spans 536 residues: CTP synthase (536 aa).

Positions 1–267 (MSKFVFVTGG…CKETLKYLEL (267 aa)) are amidoligase domain. S13 serves as a coordination point for CTP. Residue S13 participates in UTP binding. ATP contacts are provided by residues 14-19 (SIGKGI) and D71. Mg(2+) is bound by residues D71 and E141. Residues 148-150 (DIE), 188-193 (KTKPTQ), and K224 contribute to the CTP site. UTP is bound by residues 188–193 (KTKPTQ) and K224. In terms of domain architecture, Glutamine amidotransferase type-1 spans 292–534 (KVALVGKYIE…IKASQEKLTQ (243 aa)). G354 provides a ligand contact to L-glutamine. C381 acts as the Nucleophile; for glutamine hydrolysis in catalysis. L-glutamine-binding positions include 382 to 385 (LGMQ), E405, and R462. Active-site residues include H507 and E509.

This sequence belongs to the CTP synthase family. In terms of assembly, homotetramer.

It carries out the reaction UTP + L-glutamine + ATP + H2O = CTP + L-glutamate + ADP + phosphate + 2 H(+). It catalyses the reaction L-glutamine + H2O = L-glutamate + NH4(+). The catalysed reaction is UTP + NH4(+) + ATP = CTP + ADP + phosphate + 2 H(+). The protein operates within pyrimidine metabolism; CTP biosynthesis via de novo pathway; CTP from UDP: step 2/2. Allosterically activated by GTP, when glutamine is the substrate; GTP has no effect on the reaction when ammonia is the substrate. The allosteric effector GTP functions by stabilizing the protein conformation that binds the tetrahedral intermediate(s) formed during glutamine hydrolysis. Inhibited by the product CTP, via allosteric rather than competitive inhibition. In terms of biological role, catalyzes the ATP-dependent amination of UTP to CTP with either L-glutamine or ammonia as the source of nitrogen. Regulates intracellular CTP levels through interactions with the four ribonucleotide triphosphates. The sequence is that of CTP synthase from Prochlorococcus marinus (strain MIT 9215).